A 78-amino-acid chain; its full sequence is U7-lycotoxin-Ls1h (78 aa).

Residues Met-1 to Ala-22 form the signal peptide. The propeptide occupies Gln-23–Gly-26.

This sequence belongs to the neurotoxin 19 (CSTX) family. 07 (U7-Lctx) subfamily. Post-translationally, contains 4 disulfide bonds. As to expression, expressed by the venom gland.

The protein resides in the secreted. This chain is U7-lycotoxin-Ls1h, found in Lycosa singoriensis (Wolf spider).